The following is a 301-amino-acid chain: uncharacterized protein (301 aa).

Glu146, Glu148, and Asp177 together coordinate a divalent metal cation.

The protein belongs to the FAH family.

This is an uncharacterized protein from Staphylococcus epidermidis (strain ATCC 12228 / FDA PCI 1200).